The following is a 123-amino-acid chain: Small ribosomal subunit protein uS12 (123 aa).

Residues 1–28 form a disordered region; sequence MPTIQQLIRKPRQPKVKRSKSMHLEQCP. A compositionally biased stretch (basic residues) spans 9–21; it reads RKPRQPKVKRSKS. At D89 the chain carries 3-methylthioaspartic acid.

The protein belongs to the universal ribosomal protein uS12 family. Part of the 30S ribosomal subunit. Contacts proteins S8 and S17. May interact with IF1 in the 30S initiation complex.

Functionally, with S4 and S5 plays an important role in translational accuracy. In terms of biological role, interacts with and stabilizes bases of the 16S rRNA that are involved in tRNA selection in the A site and with the mRNA backbone. Located at the interface of the 30S and 50S subunits, it traverses the body of the 30S subunit contacting proteins on the other side and probably holding the rRNA structure together. The combined cluster of proteins S8, S12 and S17 appears to hold together the shoulder and platform of the 30S subunit. This is Small ribosomal subunit protein uS12 from Ruegeria sp. (strain TM1040) (Silicibacter sp.).